The chain runs to 277 residues: 3-methyl-2-oxobutanoate hydroxymethyltransferase (277 aa).

2 residues coordinate Mg(2+): Asp43 and Asp82. 3-methyl-2-oxobutanoate contacts are provided by residues 43 to 44, Asp82, and Lys112; that span reads DS. Glu114 lines the Mg(2+) pocket. The Proton acceptor role is filled by Glu181.

The protein belongs to the PanB family. In terms of assembly, homodecamer; pentamer of dimers. It depends on Mg(2+) as a cofactor.

It is found in the cytoplasm. The catalysed reaction is 3-methyl-2-oxobutanoate + (6R)-5,10-methylene-5,6,7,8-tetrahydrofolate + H2O = 2-dehydropantoate + (6S)-5,6,7,8-tetrahydrofolate. It participates in cofactor biosynthesis; (R)-pantothenate biosynthesis; (R)-pantoate from 3-methyl-2-oxobutanoate: step 1/2. In terms of biological role, catalyzes the reversible reaction in which hydroxymethyl group from 5,10-methylenetetrahydrofolate is transferred onto alpha-ketoisovalerate to form ketopantoate. The chain is 3-methyl-2-oxobutanoate hydroxymethyltransferase from Exiguobacterium sp. (strain ATCC BAA-1283 / AT1b).